The chain runs to 1898 residues: Receptor-type tyrosine-protein phosphatase F (1898 aa).

The N-terminal stretch at 1–29 (MAPEPAPGRRMVPLVPALVMLGLMAGAHG) is a signal peptide. The Extracellular portion of the chain corresponds to 30 to 1254 (DSKPVFVKVP…QQQEEPEMLW (1225 aa)). Ig-like C2-type domains are found at residues 33-123 (PVFV…AKLS), 135-224 (PTID…ANLY), and 232-314 (PRFS…AQVT). Cys54 and Cys107 are disulfide-bonded. 68–77 (KKGKKVSSQR) lines the heparin pocket. An N-linked (GlcNAc...) asparagine glycan is attached at Asn117. Cys156 and Cys207 are disulfide-bonded. 2 N-linked (GlcNAc...) asparagine glycosylation sites follow: Asn250 and Asn295. Cysteines 253 and 298 form a disulfide. Fibronectin type-III domains follow at residues 321–411 (PPID…TGEQ), 416–510 (PPRR…TQQG), 514–604 (QPAD…TAQS), 609–706 (PPQK…TDED), 711–810 (PPRK…TTGA), 811–904 (VPGR…TPED), 909–1001 (FPQN…TMPV), and 1005–1089 (FAKN…TAPD). Residues 693 to 712 (GPESSPVLVRTDEDVPSGPP) form a disordered region. Residue Asn721 is glycosylated (N-linked (GlcNAc...) asparagine). N-linked (GlcNAc...) asparagine glycosylation is found at Asn941, Asn957, and Asn960. Residues 1255–1275 (VTGPVLAVILIILIVIAILLF) form a helical membrane-spanning segment. Residues 1276 to 1898 (KRKRTHSPSS…YLGSFDHYAT (623 aa)) lie on the Cytoplasmic side of the membrane. A Phosphoserine modification is found at Ser1296. Tyrosine-protein phosphatase domains are found at residues 1343 to 1598 (FSQE…LLEA) and 1630 to 1889 (MELE…ALEY). Substrate is bound by residues Asp1507, 1539-1545 (CSAGVGR), and Gln1583. The active-site Phosphocysteine intermediate is Cys1539. The active-site Phosphocysteine intermediate is Cys1830.

This sequence belongs to the protein-tyrosine phosphatase family. Receptor class 2A subfamily. Interacts with GRIP1. Interacts with PPFIA1, PPFIA2 and PPFIA3. Interacts with PTPRF. In terms of tissue distribution, expressed in the cell of the T lineage but not in cells of any other hemopoietic lineage.

The protein resides in the membrane. It catalyses the reaction O-phospho-L-tyrosyl-[protein] + H2O = L-tyrosyl-[protein] + phosphate. Its function is as follows. Possible cell adhesion receptor. It possesses an intrinsic protein tyrosine phosphatase activity (PTPase) and dephosphorylates EPHA2 regulating its activity. This is Receptor-type tyrosine-protein phosphatase F (Ptprf) from Mus musculus (Mouse).